The following is an 887-amino-acid chain: MINTSPLLNYVSSHHDIKAINQWRTDVEKQLQDSYENGQSIREIIKARSDLVDEALVFLWKHAELDQSKLGLFAVGGYGRREMLPYSDVDIMILSEDEISEENEKRISTFISSLWDVGNFKPGISVRTIQSCVEQAATDLTVATTLIEARLITGNTQLAKWPRRIVSQTWTDKTFYDAKMAEQAKRYHQHNNTESNLEPDIKNAPGGIRDINQIGWIAKRHFRVNRIYDLVHLGFISEFELAVLEEAESFLWEIRHHLHRLAKRDENRLLFDHQREIAAKFGYVRQEGQPVNYGVEQFMKRYYRTAQQVSTLNEMLLAYFSESVITPRLPNYERKIEVVNDHFKIVDNKLAVQHHKIFAEHPSAILELFYILANRPDIEGIRARTLRLLILAAKRINQSYRDNPEHQALFMSIIRSPYRLYDTLVAMKRYGVLGNYIPAFGQIMGLMQYDLFHIYTVDAHTLLLLRNLNRFREPEFAKEFPVVSSVFQRLARQDIVFIAALFHDIAKGRGGDHSELGAEDAIEFGRAHGFTERECKLIAWLIQNHLLMSLTAQKKDISDPDVVKDFAEKLGDMEHLDYLYTLTVADINATNPKLWNTWRASLMRQLYTHARDVIRTGLGRPVDYQMLIEDTKFAASELLVNNFALADVEKVWQELGDEYFIKESADEIAWHTQAILKHGDNPEPLVLLRAHRKAAQDAVQIFIYTRDQPNLFATTVAVLDRMNLDVQDAKIITASTAFSLDTYVVLDRFGTLLTDPEREETVKNALVKALSQPDQYPGLMQRRIPRQLRHFDIENTVDVTLNEALQQNMVEISTLDHPGLLARVGGLFMMQGLDIHSARIATLGERAEDIFFVTKKDGKPLNHEEVKLFSEKLKAALDEASNQICQH.

Positions 1-337 are uridylyltransferase; sequence MINTSPLLNY…RLPNYERKIE (337 aa). The segment at 339 to 699 is uridylyl-removing; the sequence is VNDHFKIVDN…AHRKAAQDAV (361 aa). The HD domain maps to 457–579; that stretch reads VDAHTLLLLR…LGDMEHLDYL (123 aa). 2 consecutive ACT domains span residues 700–782 and 809–887; these read QIFI…LMQR and MVEI…ICQH.

Belongs to the GlnD family. Requires Mg(2+) as cofactor.

The catalysed reaction is [protein-PII]-L-tyrosine + UTP = [protein-PII]-uridylyl-L-tyrosine + diphosphate. It catalyses the reaction [protein-PII]-uridylyl-L-tyrosine + H2O = [protein-PII]-L-tyrosine + UMP + H(+). Uridylyltransferase (UTase) activity is inhibited by glutamine, while glutamine activates uridylyl-removing (UR) activity. In terms of biological role, modifies, by uridylylation and deuridylylation, the PII regulatory proteins (GlnB and homologs), in response to the nitrogen status of the cell that GlnD senses through the glutamine level. Under low glutamine levels, catalyzes the conversion of the PII proteins and UTP to PII-UMP and PPi, while under higher glutamine levels, GlnD hydrolyzes PII-UMP to PII and UMP (deuridylylation). Thus, controls uridylylation state and activity of the PII proteins, and plays an important role in the regulation of nitrogen assimilation and metabolism. The sequence is that of Bifunctional uridylyltransferase/uridylyl-removing enzyme from Acinetobacter baumannii (strain ATCC 17978 / DSM 105126 / CIP 53.77 / LMG 1025 / NCDC KC755 / 5377).